A 306-amino-acid chain; its full sequence is MSPAASSATRPSTLPPVRGRLTAGAPLAPLVWFKSGGAAEWLFEPADVDDLSDFLAALDPAVPVMGLGLGSNLIVRDGGVPGVVVRLGKPFARVERLDATTLRCGGGASGILVSSTARDAGIGGVEFLRSIPGTVGGFVRMNGGAYGREVKDVLVEGEVVLRSGERRVLSLAELGYTYRHSALPEGAIVVAATFRGHAEAPAVVQAEMDRIAAEREASQPLRSRTGGSTFKNPQGHKAWQLVDAAGCRGLTRGDAQVSEKHCNFLLNLGTASSADIEGLGEEVRERVKANSGVTLEWEIQRVGVNP.

In terms of domain architecture, FAD-binding PCMH-type spans 34-199; sequence KSGGAAEWLF…VAATFRGHAE (166 aa). R179 is an active-site residue. The disordered stretch occupies residues 215 to 234; sequence REASQPLRSRTGGSTFKNPQ. Residues 220–232 are compositionally biased toward polar residues; it reads PLRSRTGGSTFKN. The active-site Proton donor is S228. Residue E298 is part of the active site.

This sequence belongs to the MurB family. FAD serves as cofactor.

It localises to the cytoplasm. The catalysed reaction is UDP-N-acetyl-alpha-D-muramate + NADP(+) = UDP-N-acetyl-3-O-(1-carboxyvinyl)-alpha-D-glucosamine + NADPH + H(+). It functions in the pathway cell wall biogenesis; peptidoglycan biosynthesis. In terms of biological role, cell wall formation. The polypeptide is UDP-N-acetylenolpyruvoylglucosamine reductase (Rhizorhabdus wittichii (strain DSM 6014 / CCUG 31198 / JCM 15750 / NBRC 105917 / EY 4224 / RW1) (Sphingomonas wittichii)).